The primary structure comprises 191 residues: Nucleoside triphosphate pyrophosphatase (191 aa).

The active-site Proton acceptor is Asp-70.

The protein belongs to the Maf family. The cofactor is a divalent metal cation.

It is found in the cytoplasm. The enzyme catalyses a ribonucleoside 5'-triphosphate + H2O = a ribonucleoside 5'-phosphate + diphosphate + H(+). It catalyses the reaction a 2'-deoxyribonucleoside 5'-triphosphate + H2O = a 2'-deoxyribonucleoside 5'-phosphate + diphosphate + H(+). Its function is as follows. Nucleoside triphosphate pyrophosphatase. May have a dual role in cell division arrest and in preventing the incorporation of modified nucleotides into cellular nucleic acids. The protein is Nucleoside triphosphate pyrophosphatase of Synechococcus sp. (strain WH7803).